The chain runs to 522 residues: Cytochrome P450 monooxygenase FGSG_08207 (522 aa).

Residues 10–30 (LLLSKPVVLGLAACALLFLIG) form a helical membrane-spanning segment. 2 N-linked (GlcNAc...) asparagine glycosylation sites follow: N104 and N155. C441 is a heme binding site.

Belongs to the cytochrome P450 family. The cofactor is heme.

Its subcellular location is the membrane. It functions in the pathway secondary metabolite biosynthesis. In terms of biological role, cytochrome P450 monooxygenase; part of the gene cluster that mediates the biosynthesis of the lipopeptide fusaristatin A. Fusaristatin A consists of a polyketide chain linked to three amino acid residues glutamine (Gln), dehydroalanine (dehydro-Ala), and beta-aminoisobutyric acid. The biosynthesis starts with formation of a linear polyketide chain by the highly reducing polyketide synthase PKS6. The gene cluster does not contain an acyl-CoA ligase or an acyl-transferase, and it is therefore predicted that the polyketide is transferred directly to the nonribosomal peptide synthetase NRPS7. Modules 1-3 from NRPS7 incorporate dehydro-Ala, Gln, and beta-aminoisobutyric acid in the compound, which is released by cyclization. The beta-aminoisobutyric acid units are most likely not freely available to the NRPS, but can be synthesized from thymine, which requires a dehydrogenase, a monooxygenase, and an aminotransferase. The fusaristatin A cluster contains a cytochrome P450 monooxygenase (FGSG_08207) and an aminotransferase (FGSG_17085), which theoretically can perform two of the enzymatic steps. The enzymes may however also be involved in biosynthesis of dehydroalanine or modification of the polyketide. The dehydro-Ala residue can be a result of cyclization, where serine is dehydrated. The last gene of the cluster encodes a protein with an A/B barrel domain found in variable enzymes, which hampers functional prediction. The polypeptide is Cytochrome P450 monooxygenase FGSG_08207 (Gibberella zeae (strain ATCC MYA-4620 / CBS 123657 / FGSC 9075 / NRRL 31084 / PH-1) (Wheat head blight fungus)).